Here is a 449-residue protein sequence, read N- to C-terminus: Phosphoglucosamine mutase (449 aa).

Ser-104 functions as the Phosphoserine intermediate in the catalytic mechanism. Residues Ser-104, Asp-243, Asp-245, and Asp-247 each coordinate Mg(2+). Ser-104 bears the Phosphoserine mark.

This sequence belongs to the phosphohexose mutase family. Mg(2+) is required as a cofactor. Post-translationally, activated by phosphorylation.

It carries out the reaction alpha-D-glucosamine 1-phosphate = D-glucosamine 6-phosphate. Catalyzes the conversion of glucosamine-6-phosphate to glucosamine-1-phosphate. This Xanthomonas oryzae pv. oryzae (strain PXO99A) protein is Phosphoglucosamine mutase.